A 2227-amino-acid chain; its full sequence is Genome polyprotein (2227 aa).

2 short sequence motifs ((L)YPX(n)L motif) span residues Tyr167 to Leu171 and Tyr200 to Leu205. The segment at Met766 to Gln836 is involved in P1-2A pentamerization. Residues Val1010–Val1030 form a helical membrane-spanning segment. The membrane-penetrating ability stretch occupies residues Ile1043–Glu1070. The stretch at Lys1127–Phe1152 forms a coiled coil. The region spanning His1204–Met1366 is the SF3 helicase domain. Gly1230–Ser1237 provides a ligand contact to ATP. Residues Trp1462–Tyr1482 form a helical membrane-spanning segment. Tyr1499 bears the O-(5'-phospho-RNA)-tyrosine mark. The Peptidase C3 domain maps to Asp1514 to Phe1728. Residues His1563, Asp1603, and Cys1691 each act as for protease 3C activity in the active site. The region spanning Asp1976 to Asn2097 is the RdRp catalytic domain.

It belongs to the picornaviridae polyprotein family. Homodimer. Homomultimer; probably interacts with membranes in a multimeric form. Seems to assemble into amyloid-like fibers. In terms of assembly, homodimer. Monomer. Interacts with protein 3CD. As to quaternary structure, interacts with host ACBD3. Interacts with protein 3AB. In terms of assembly, interacts with human MAVS. As to quaternary structure, homodimer; disulfide-linked. Homopentamer. Homooligomer. In terms of assembly, interacts with capsid protein VP2. Interacts with capsid protein VP3. As to quaternary structure, interacts with capsid protein VP1. Interacts with capsid protein VP3. Interacts with capsid protein VP1. Interacts with capsid protein VP2. In terms of processing, specific enzymatic cleavages by viral protease in vivo yield a variety of precursors and mature proteins. Polyprotein processing intermediates are produced, such as P1-2A which is a functional precursor of the structural proteins, VP0 which is a VP4-VP2 precursor, VP1-2A precursor, 3ABC precursor which is a stable and catalytically active precursor of 3A, 3B and 3C proteins, 3AB and 3CD precursors. The assembly signal 2A is removed from VP1-2A by a host protease, possibly host Cathepsin L. This cleavage occurs over a region of 3 amino-acids probably generating VP1 proteins with heterogeneous C-termini. Post-translationally, during virion maturation, immature virions are rendered infectious following cleavage of VP0 into VP4 and VP2. This maturation seems to be an autocatalytic event triggered by the presence of RNA in the capsid and is followed by a conformational change of the particle. The assembly signal 2A is removed from VP1-2A by a host protease, possibly host Cathepsin L in naked virions. This cleavage does not occur in enveloped virions. This cleavage occurs over a region of 3 amino-acids probably generating VP1 proteins with heterogeneous C-termini. In terms of processing, VPg is uridylylated prior to priming replication into VPg-pUpU. Post-translationally, unlike other picornaviruses, does not seem to be myristoylated.

It is found in the virion. Its subcellular location is the host endosome. The protein resides in the host multivesicular body. It localises to the host membrane. The protein localises to the host mitochondrion outer membrane. It is found in the host cytoplasm. Its subcellular location is the host cytoplasmic vesicle membrane. It carries out the reaction RNA(n) + a ribonucleoside 5'-triphosphate = RNA(n+1) + diphosphate. The enzyme catalyses a ribonucleoside 5'-triphosphate + H2O = a ribonucleoside 5'-diphosphate + phosphate + H(+). The catalysed reaction is Selective cleavage of Gln-|-Gly bond in the poliovirus polyprotein. In other picornavirus reactions Glu may be substituted for Gln, and Ser or Thr for Gly.. Its function is as follows. Capsid proteins VP1, VP2, and VP3 form a closed capsid enclosing the viral positive strand RNA genome. All these proteins contain a beta-sheet structure called beta-barrel jelly roll. Together they form an icosahedral capsid (T=3) composed of 60 copies of each VP1, VP2, and VP3, with a diameter of approximately 300 Angstroms. VP1 is situated at the 12 fivefold axes, whereas VP2 and VP3 are located at the quasi-sixfold axes. The naked capsid interacts with the host receptor HAVCR1 to provide virion attachment to and probably entry into the target cell. Functionally, VP0 precursor is a component of the immature procapsids. In terms of biological role, plays a role in the assembly of the 12 pentamers into an icosahedral structure. Has not been detected in mature virions, supposedly owing to its small size. Precursor component of immature procapsids that corresponds to an extended form of the structural protein VP1. After maturation, possibly by the host Cathepsin L, the assembly signal 2A is cleaved to give rise to the mature VP1 protein. Its function is as follows. Functions as a viroporin. Affects membrane integrity and causes an increase in membrane permeability. Involved in host intracellular membrane rearrangements probably to give rise to the viral factories. Does not disrupt calcium homeostasis or glycoprotein trafficking. Antagonizes the innate immune response of the host by suppressing IFN-beta synthesis, which it achieves by interfering with the RIG-I/IFIH1 pathway. Functionally, affects membrane integrity and causes an increase in membrane permeability. In terms of biological role, associates with and induces structural rearrangements of intracellular membranes. Displays RNA-binding activity. The precursor 3ABC is targeted to the mitochondrial membrane where protease 3C activity cleaves and inhibits the host antiviral protein MAVS, thereby disrupting activation of IRF3 through the IFIH1/MDA5 pathway. In vivo, the protease activity of 3ABC precursor is more efficient in cleaving the 2BC precursor than that of protein 3C. The 3ABC precursor may therefore play a role in the proteolytic processing of the polyprotein. Possible viroporin. Its function is as follows. Interacts with the 3CD precursor and with RNA structures found at both the 5'- and 3'-termini of the viral genome. Since the 3AB precursor contains the hydrophobic domain 3A, it probably anchors the whole viral replicase complex to intracellular membranes on which viral RNA synthesis occurs. Functionally, may serve as membrane anchor to the 3AB and 3ABC precursors via its hydrophobic domain. May interact with RNA. In terms of biological role, acts as a primer for viral RNA replication and remains covalently bound to viral genomic RNA. VPg is uridylylated prior to priming replication into VPg-pUpU. The VPg-pUpU is then used as primer on the genomic RNA poly(A) by the RNA-dependent RNA polymerase to replicate the viral genome. Cysteine protease that generates mature viral proteins from the precursor polyprotein. In addition to its proteolytic activity, it binds to viral RNA, and thus influences viral genome replication. RNA and substrate bind cooperatively to the protease. Cleaves IKBKG/NEMO to impair innate immune signaling. Cleaves host PABPC1 which may participate in the switch of viral translation to RNA synthesis. Its function is as follows. Interacts with the 3AB precursor and with RNA structures found at both the 5'- and 3'-termini of the viral genome. Disrupts TLR3 signaling by degrading the host adapter protein TICAM1/TRIF. Functionally, replicates genomic and antigenomic RNA by recognizing replications specific signals. The polypeptide is Genome polyprotein (Cercopithecus hamlyni (Owl-faced monkey)).